The chain runs to 81 residues: Photosystem I iron-sulfur center (81 aa).

2 4Fe-4S ferredoxin-type domains span residues 2–31 (SHTV…MAPW) and 39–68 (VASA…VRVY). [4Fe-4S] cluster contacts are provided by cysteine 11, cysteine 14, cysteine 17, cysteine 21, cysteine 48, cysteine 51, cysteine 54, and cysteine 58.

In terms of assembly, the eukaryotic PSI reaction center is composed of at least 11 subunits. Requires [4Fe-4S] cluster as cofactor.

It is found in the plastid. Its subcellular location is the chloroplast thylakoid membrane. The catalysed reaction is reduced [plastocyanin] + hnu + oxidized [2Fe-2S]-[ferredoxin] = oxidized [plastocyanin] + reduced [2Fe-2S]-[ferredoxin]. Its function is as follows. Apoprotein for the two 4Fe-4S centers FA and FB of photosystem I (PSI); essential for photochemical activity. FB is the terminal electron acceptor of PSI, donating electrons to ferredoxin. The C-terminus interacts with PsaA/B/D and helps assemble the protein into the PSI complex. Required for binding of PsaD and PsaE to PSI. PSI is a plastocyanin/cytochrome c6-ferredoxin oxidoreductase, converting photonic excitation into a charge separation, which transfers an electron from the donor P700 chlorophyll pair to the spectroscopically characterized acceptors A0, A1, FX, FA and FB in turn. This is Photosystem I iron-sulfur center from Tupiella akineta (Green alga).